We begin with the raw amino-acid sequence, 33 residues long: Brevinin-2DYc (33 aa).

Cys27 and Cys33 form a disulfide bridge.

Expressed by the skin glands.

Its subcellular location is the secreted. In terms of biological role, antimicrobial peptide. A mixture of Brevinin-2DYc/2DYd is active against the Gram-positive bacterium S.aureus (MIC=15 uM) and the Gram-negative bacterium E.coli (MIC=15 uM). The protein is Brevinin-2DYc of Rana dybowskii (Dybovsky's frog).